Reading from the N-terminus, the 409-residue chain is Dual-specificity RNA methyltransferase RlmN (409 aa).

Catalysis depends on Glu-117, which acts as the Proton acceptor. The 250-residue stretch at 128–377 (LNGRKTLCIS…CTIRQTRGDD (250 aa)) folds into the Radical SAM core domain. Residues Cys-135 and Cys-382 are joined by a disulfide bond. [4Fe-4S] cluster-binding residues include Cys-142, Cys-146, and Cys-149. S-adenosyl-L-methionine-binding positions include 205 to 206 (GE), Ser-237, 259 to 261 (SLH), and Asn-339. The active-site S-methylcysteine intermediate is Cys-382.

This sequence belongs to the radical SAM superfamily. RlmN family. The cofactor is [4Fe-4S] cluster.

It is found in the cytoplasm. The enzyme catalyses adenosine(2503) in 23S rRNA + 2 reduced [2Fe-2S]-[ferredoxin] + 2 S-adenosyl-L-methionine = 2-methyladenosine(2503) in 23S rRNA + 5'-deoxyadenosine + L-methionine + 2 oxidized [2Fe-2S]-[ferredoxin] + S-adenosyl-L-homocysteine. It carries out the reaction adenosine(37) in tRNA + 2 reduced [2Fe-2S]-[ferredoxin] + 2 S-adenosyl-L-methionine = 2-methyladenosine(37) in tRNA + 5'-deoxyadenosine + L-methionine + 2 oxidized [2Fe-2S]-[ferredoxin] + S-adenosyl-L-homocysteine. Functionally, specifically methylates position 2 of adenine 2503 in 23S rRNA and position 2 of adenine 37 in tRNAs. m2A2503 modification seems to play a crucial role in the proofreading step occurring at the peptidyl transferase center and thus would serve to optimize ribosomal fidelity. In Psychrobacter arcticus (strain DSM 17307 / VKM B-2377 / 273-4), this protein is Dual-specificity RNA methyltransferase RlmN.